Reading from the N-terminus, the 347-residue chain is Phosphoribosylformylglycinamidine cyclo-ligase (347 aa).

Belongs to the AIR synthase family.

The protein resides in the cytoplasm. It carries out the reaction 2-formamido-N(1)-(5-O-phospho-beta-D-ribosyl)acetamidine + ATP = 5-amino-1-(5-phospho-beta-D-ribosyl)imidazole + ADP + phosphate + H(+). Its pathway is purine metabolism; IMP biosynthesis via de novo pathway; 5-amino-1-(5-phospho-D-ribosyl)imidazole from N(2)-formyl-N(1)-(5-phospho-D-ribosyl)glycinamide: step 2/2. This Prochlorococcus marinus (strain AS9601) protein is Phosphoribosylformylglycinamidine cyclo-ligase.